Consider the following 291-residue polypeptide: POU class 2 homeobox associating-factor 2 (291 aa).

The OCA domain maps to 7–29 (KRVYQGVRVKHTVKDLLAEKRLR). The tract at residues 176–219 (AAPVADSPSLAGPDSGSSSPYRLTSGRSGSSIPSSSQPYTLQPL) is disordered. A compositionally biased stretch (low complexity) spans 200-211 (SGRSGSSIPSSS).

Belongs to the POU2AF family.

Its function is as follows. Transcriptional coactivator that may regulate cell type-specific differentiation pathways. In Danio rerio (Zebrafish), this protein is POU class 2 homeobox associating-factor 2 (pou2af2).